Here is a 298-residue protein sequence, read N- to C-terminus: Ribosomal RNA small subunit methyltransferase A (298 aa).

N30, V32, G57, E78, D108, and N126 together coordinate S-adenosyl-L-methionine.

Belongs to the class I-like SAM-binding methyltransferase superfamily. rRNA adenine N(6)-methyltransferase family. RsmA subfamily.

It localises to the cytoplasm. It carries out the reaction adenosine(1518)/adenosine(1519) in 16S rRNA + 4 S-adenosyl-L-methionine = N(6)-dimethyladenosine(1518)/N(6)-dimethyladenosine(1519) in 16S rRNA + 4 S-adenosyl-L-homocysteine + 4 H(+). Its function is as follows. Specifically dimethylates two adjacent adenosines (A1518 and A1519) in the loop of a conserved hairpin near the 3'-end of 16S rRNA in the 30S particle. May play a critical role in biogenesis of 30S subunits. In Cutibacterium acnes (strain DSM 16379 / KPA171202) (Propionibacterium acnes), this protein is Ribosomal RNA small subunit methyltransferase A.